We begin with the raw amino-acid sequence, 665 residues long: BTB/POZ domain-containing protein At1g30440 (665 aa).

The BTB domain maps to 28-98 (SDIVVEVGEM…CYGVKLELTA (71 aa)). The region spanning 214-508 (DWWYEDASML…VQVLFFEQLQ (295 aa)) is the NPH3 domain. The interval 260–280 (LKRRRGGPESSGRFSTPLGSG) is disordered. A compositionally biased stretch (polar residues) spans 271-280 (GRFSTPLGSG). The residue at position 279 (Ser-279) is a Phosphoserine. The stretch at 281-306 (NVLSEEEQKNLLEEIQELLRMQKGLV) forms a coiled coil. A Phosphotyrosine modification is found at Tyr-449. The segment covering 626 to 639 (SAQEGSVSKSNNEN) has biased composition (polar residues). Residues 626–665 (SAQEGSVSKSNNENVKIEKLKDVKERRGKHKKASSISSER) form a disordered region. A compositionally biased stretch (basic and acidic residues) spans 640-650 (VKIEKLKDVKE).

The protein belongs to the NPH3 family.

Its pathway is protein modification; protein ubiquitination. May act as a substrate-specific adapter of an E3 ubiquitin-protein ligase complex (CUL3-RBX1-BTB) which mediates the ubiquitination and subsequent proteasomal degradation of target proteins. This chain is BTB/POZ domain-containing protein At1g30440, found in Arabidopsis thaliana (Mouse-ear cress).